A 348-amino-acid polypeptide reads, in one-letter code: Alcohol dehydrogenase 1 (348 aa).

The residue at position 2 (Ser2) is an N-acetylserine. Cys44 provides a ligand contact to Zn(2+). Positions 45, 46, and 49 each coordinate NAD(+). Zn(2+)-binding residues include His67, Glu68, Cys98, Cys101, Cys104, Cys112, and Cys154. Positions 181, 182, 183, 202, and 207 each coordinate NAD(+). Phosphoserine is present on Ser213. Residue Phe222 participates in NAD(+) binding. Thr223 carries the phosphothreonine modification. Glycyl lysine isopeptide (Lys-Gly) (interchain with G-Cter in ubiquitin) cross-links involve residues Lys226 and Lys234. NAD(+)-binding residues include Val269 and Met271. Residue Ser279 is modified to Phosphoserine. A Glycyl lysine isopeptide (Lys-Gly) (interchain with G-Cter in ubiquitin) cross-link involves residue Lys287. Residues Ser294 and Val296 each contribute to the NAD(+) site. Phosphoserine is present on Ser316. Lys319 participates in a covalent cross-link: Glycyl lysine isopeptide (Lys-Gly) (interchain with G-Cter in ubiquitin). Arg341 lines the NAD(+) pocket.

This sequence belongs to the zinc-containing alcohol dehydrogenase family. In terms of assembly, homotetramer. Zn(2+) serves as cofactor.

The protein localises to the cytoplasm. It catalyses the reaction a primary alcohol + NAD(+) = an aldehyde + NADH + H(+). It carries out the reaction a secondary alcohol + NAD(+) = a ketone + NADH + H(+). The catalysed reaction is ethanol + NAD(+) = acetaldehyde + NADH + H(+). The enzyme catalyses allyl alcohol + NADP(+) = acrolein + NADPH + H(+). It catalyses the reaction 1-propanol + NAD(+) = propanal + NADH + H(+). It carries out the reaction butan-1-ol + NAD(+) = butanal + NADH + H(+). The catalysed reaction is hexan-1-ol + NAD(+) = hexanal + NADH + H(+). The enzyme catalyses (R)-lactaldehyde + NAD(+) = methylglyoxal + NADH + H(+). It catalyses the reaction octan-1-ol + NAD(+) = octanal + NADH + H(+). It carries out the reaction butan-2-ol + NAD(+) = butan-2-one + NADH + H(+). The catalysed reaction is propan-2-ol + NAD(+) = acetone + NADH + H(+). The enzyme catalyses isobutanol + NAD(+) = 2-methylpropanal + NADH + H(+). Preferentially fermentative isozyme that reduces acetaldehyde to ethanol during the fermentation of glucose. Major enzyme required for the conversion of acetaldehyde to ethanol. Plays a key role in the carbohydrate metabolism through the regeneration of NAD(+) from glycolytic NADH. In the reverse reaction, preferentially catalyzes the conversion of primary unbranched alcohols to their corresponding aldehydes. Also shows activity toward secondary alcohols. Most active with ethanol, and its activity decreases as the size of the alcohol is increased. In Saccharomyces cerevisiae (strain ATCC 204508 / S288c) (Baker's yeast), this protein is Alcohol dehydrogenase 1 (ADH1).